Here is an 824-residue protein sequence, read N- to C-terminus: Putative beta-glucuronidase (824 aa).

The helical transmembrane segment at 26–43 (YLKLVLVLYLIMVSWSGY) threads the bilayer. The active-site Proton donor is the Glu-430.

This sequence belongs to the glycosyl hydrolase 2 family.

The protein localises to the membrane. The enzyme catalyses a beta-D-glucuronoside + H2O = D-glucuronate + an alcohol. In terms of biological role, glycoside hydrolase that may be involved in ulvan degradation. Ulvan is the main polysaccharide component of the Ulvales (green seaweed) cell wall. It is composed of disaccharide building blocks comprising 3-sulfated rhamnose (Rha3S) linked to D-glucuronic acid (GlcA), L-iduronic acid (IduA), or D-xylose (Xyl). The polypeptide is Putative beta-glucuronidase (Formosa agariphila (strain DSM 15362 / KCTC 12365 / LMG 23005 / KMM 3901 / M-2Alg 35-1)).